We begin with the raw amino-acid sequence, 372 residues long: Glutamate 5-kinase (372 aa).

ATP is bound at residue lysine 14. Substrate-binding residues include serine 54, aspartate 141, and asparagine 153. Residues 173 to 174 (TD) and 215 to 221 (TGGMATK) contribute to the ATP site. The region spanning 280–358 (RGKLILDQGA…DDIESLLGYD (79 aa)) is the PUA domain.

This sequence belongs to the glutamate 5-kinase family.

The protein resides in the cytoplasm. The catalysed reaction is L-glutamate + ATP = L-glutamyl 5-phosphate + ADP. It participates in amino-acid biosynthesis; L-proline biosynthesis; L-glutamate 5-semialdehyde from L-glutamate: step 1/2. In terms of biological role, catalyzes the transfer of a phosphate group to glutamate to form L-glutamate 5-phosphate. The protein is Glutamate 5-kinase of Shewanella sediminis (strain HAW-EB3).